The chain runs to 262 residues: MIFVLDVGNTNAVLGVFEEGKLCQHWRMETDRHKTEDEYGMLIKQLLEHEGLSFGDIKGIIVSSVVPPIMFALERMCEKYFKIKPLVVGPGIKTGLNIKYENPREVGADRIVNAVAGIQLYGSPLIIVDFGTATTYCYINEEKHYMGGVITPGIMISAEALYSRAAKLPRIEITKPSSIVGKNTVSAMQAGILYGYVGQVEGIVKRMKEEAKQEPTVIATGGLAKLIAEESNVIDIVDPFLTLKGLYMLYERNAILQHEKGE.

6–13 (DVGNTNAV) contacts ATP. Substrate is bound by residues tyrosine 100 and 107–110 (GADR). The active-site Proton acceptor is aspartate 109. Aspartate 129 is a K(+) binding site. Threonine 132 contributes to the ATP binding site. Threonine 184 contributes to the substrate binding site.

This sequence belongs to the type III pantothenate kinase family. Homodimer. The cofactor is NH4(+). Requires K(+) as cofactor.

It localises to the cytoplasm. It carries out the reaction (R)-pantothenate + ATP = (R)-4'-phosphopantothenate + ADP + H(+). It participates in cofactor biosynthesis; coenzyme A biosynthesis; CoA from (R)-pantothenate: step 1/5. In terms of biological role, catalyzes the phosphorylation of pantothenate (Pan), the first step in CoA biosynthesis. The sequence is that of Type III pantothenate kinase from Bacillus cytotoxicus (strain DSM 22905 / CIP 110041 / 391-98 / NVH 391-98).